The sequence spans 266 residues: MAAAGRLEDSSLDILQSMDDDPLLDTQPLPHHSLQAQFRPRFHPLPTVIIANLLLLIHVVFVVLAFLTGVPCLYPNPTEDKCPENYTSPLKVQTAIILGKLILWILHLLFERYVQYHHRKVRSRGYSQIYRSTRHLKTLALTIHSSGNTALLLLLCVQHSFPEPSKLYLELILAVLALELICSLSCLILYIVKIRRFNRAKPLPDVLEEEKIYAYPSNTASETGFRTVSSLEEIVEKQEDIIVYLKRHNALLSKRLLELATQPART.

The Cytoplasmic portion of the chain corresponds to 1-46 (MAAAGRLEDSSLDILQSMDDDPLLDTQPLPHHSLQAQFRPRFHPLP). The residue at position 17 (S17) is a Phosphoserine. The helical transmembrane segment at 47 to 67 (TVIIANLLLLIHVVFVVLAFL) threads the bilayer. The Lumenal segment spans residues 68-89 (TGVPCLYPNPTEDKCPENYTSP). The helical transmembrane segment at 90–110 (LKVQTAIILGKLILWILHLLF) threads the bilayer. Topologically, residues 111-137 (ERYVQYHHRKVRSRGYSQIYRSTRHLK) are cytoplasmic. The chain crosses the membrane as a helical span at residues 138 to 158 (TLALTIHSSGNTALLLLLCVQ). Residues 159 to 171 (HSFPEPSKLYLEL) are Lumenal-facing. A helical membrane pass occupies residues 172 to 192 (ILAVLALELICSLSCLILYIV). The Cytoplasmic segment spans residues 193–266 (KIRRFNRAKP…LELATQPART (74 aa)). Y213 carries the post-translational modification Phosphotyrosine. A phosphoserine mark is found at S229 and S230.

This sequence belongs to the TMEM192 family. As to quaternary structure, homodimer.

Its subcellular location is the lysosome membrane. The protein localises to the late endosome. The polypeptide is Transmembrane protein 192 (Tmem192) (Mus musculus (Mouse)).